The primary structure comprises 208 residues: MARYTASACRICRRENLKMYLKGDRCYTDKCAIERRPYPPGQHGQGRVKFSGYGVQLREKQKVKRMYGLLENQFRGYYHRASAAKGKTGDNLLQQLELRLDNVVFRMGFADTRNEARQLVRHGHFQVNGRKVNIPSFAVKPGTAVEVVEKSRKVLRISEALETVDRRGIPQWISLDKKAFKGTVTTVPNREDLTMPISEQLIVELYSK.

In terms of domain architecture, S4 RNA-binding spans 98–161; the sequence is LRLDNVVFRM…RKVLRISEAL (64 aa).

Belongs to the universal ribosomal protein uS4 family. In terms of assembly, part of the 30S ribosomal subunit. Contacts protein S5. The interaction surface between S4 and S5 is involved in control of translational fidelity.

Its function is as follows. One of the primary rRNA binding proteins, it binds directly to 16S rRNA where it nucleates assembly of the body of the 30S subunit. In terms of biological role, with S5 and S12 plays an important role in translational accuracy. In Myxococcus xanthus (strain DK1622), this protein is Small ribosomal subunit protein uS4A.